The chain runs to 882 residues: Alanine--tRNA ligase (882 aa).

Residues His-570, His-574, Cys-672, and His-676 each coordinate Zn(2+).

Belongs to the class-II aminoacyl-tRNA synthetase family. Zn(2+) is required as a cofactor.

The protein resides in the cytoplasm. The catalysed reaction is tRNA(Ala) + L-alanine + ATP = L-alanyl-tRNA(Ala) + AMP + diphosphate. Catalyzes the attachment of alanine to tRNA(Ala) in a two-step reaction: alanine is first activated by ATP to form Ala-AMP and then transferred to the acceptor end of tRNA(Ala). Also edits incorrectly charged Ser-tRNA(Ala) and Gly-tRNA(Ala) via its editing domain. The polypeptide is Alanine--tRNA ligase (Xanthomonas campestris pv. campestris (strain 8004)).